A 577-amino-acid chain; its full sequence is DNA primase (577 aa).

The CHC2-type zinc-finger motif lies at Cys-40 to Cys-64. The Toprim domain maps to Val-255–Pro-337. Positions 261, 305, and 307 each coordinate Mg(2+).

It belongs to the DnaG primase family. As to quaternary structure, monomer. Interacts with DnaB. Zn(2+) is required as a cofactor. Requires Mg(2+) as cofactor.

The catalysed reaction is ssDNA + n NTP = ssDNA/pppN(pN)n-1 hybrid + (n-1) diphosphate.. In terms of biological role, RNA polymerase that catalyzes the synthesis of short RNA molecules used as primers for DNA polymerase during DNA replication. The polypeptide is DNA primase (Buchnera aphidicola subsp. Acyrthosiphon pisum (strain APS) (Acyrthosiphon pisum symbiotic bacterium)).